Here is a 409-residue protein sequence, read N- to C-terminus: Arginine biosynthesis bifunctional protein ArgJ (409 aa).

Positions 156, 182, 193, 280, 404, and 409 each coordinate substrate. Threonine 193 (nucleophile) is an active-site residue.

The protein belongs to the ArgJ family. As to quaternary structure, heterotetramer of two alpha and two beta chains.

Its subcellular location is the cytoplasm. It carries out the reaction N(2)-acetyl-L-ornithine + L-glutamate = N-acetyl-L-glutamate + L-ornithine. The enzyme catalyses L-glutamate + acetyl-CoA = N-acetyl-L-glutamate + CoA + H(+). It participates in amino-acid biosynthesis; L-arginine biosynthesis; L-ornithine and N-acetyl-L-glutamate from L-glutamate and N(2)-acetyl-L-ornithine (cyclic): step 1/1. It functions in the pathway amino-acid biosynthesis; L-arginine biosynthesis; N(2)-acetyl-L-ornithine from L-glutamate: step 1/4. Its function is as follows. Catalyzes two activities which are involved in the cyclic version of arginine biosynthesis: the synthesis of N-acetylglutamate from glutamate and acetyl-CoA as the acetyl donor, and of ornithine by transacetylation between N(2)-acetylornithine and glutamate. The protein is Arginine biosynthesis bifunctional protein ArgJ of Nitrosomonas europaea (strain ATCC 19718 / CIP 103999 / KCTC 2705 / NBRC 14298).